A 1070-amino-acid chain; its full sequence is uncharacterized protein (1070 aa).

A UBA domain is found at 477 to 523; sequence LIDTNQLLLRQLQQIVKLGIFNEKKIKEELKANKFNEQVALQILESE.

This is an uncharacterized protein from Sulfolobus islandicus rod-shaped virus 1 (SIRV-1).